We begin with the raw amino-acid sequence, 77 residues long: Protein UL148C (77 aa).

2 consecutive transmembrane segments (helical) span residues valine 10–valine 30 and isoleucine 35–alanine 55.

The protein localises to the host membrane. The chain is Protein UL148C (UL148C) from Homo sapiens (Human).